The following is a 1165-amino-acid chain: uncharacterized protein (1165 aa).

The segment at 422–442 is disordered; that stretch reads EAAPPRPPRKSKAPEPTGDKA.

This is an uncharacterized protein from Frog virus 3 (isolate Goorha) (FV-3).